We begin with the raw amino-acid sequence, 222 residues long: MSNVYLMTRAAYVKLSRPVAKAALRAGLTPDIVTLAGTAAAVIGALTLFPIGQLWWGAVVVSFFVLADMLDGAMAREQGGGTRFGAVLDATCDRLGDGAVFAGLTWWAAFGLDSPSLVVATLICLVTSQVISYIKARAEASGLRGDGGIIERPERLVIVLIGAGLSDLPFFPLPWTLHVAMWVLAVASVVTLLQRVHAVRTSPGAMEPLHPANGEKPETSEP.

31–34 (DIVT) serves as a coordination point for a CDP-1,2-diacyl-sn-glycerol. Helical transmembrane passes span 32 to 49 (IVTLAGTAAAVIGALTLF) and 55 to 74 (WWGAVVVSFFVLADMLDGAM). Mg(2+) is bound by residues D68 and D71. A CDP-1,2-diacyl-sn-glycerol contacts are provided by G72, R76, and T82. 2 residues coordinate Mg(2+): D89 and D93. D93 functions as the Proton acceptor in the catalytic mechanism. 4 consecutive transmembrane segments (helical) span residues 95–112 (LGDGAVFAGLTWWAAFGL), 118–136 (VVATLICLVTSQVISYIKA), 156–173 (LVIVLIGAGLSDLPFFPL), and 179–196 (VAMWVLAVASVVTLLQRV).

It belongs to the CDP-alcohol phosphatidyltransferase class-I family. As to quaternary structure, homodimer. Requires Mg(2+) as cofactor.

Its subcellular location is the cell membrane. It localises to the secreted. It is found in the cell wall. The enzyme catalyses a CDP-1,2-diacyl-sn-glycerol + 1D-myo-inositol 3-phosphate = a 1,2-diacyl-sn-glycero-3-phospho-(1D-myo-inositol-3-phosphate) + CMP + H(+). It catalyses the reaction 1,2-di-(9Z-octadecenoyl)-sn-glycero-3-cytidine-5'-diphosphate + 1D-myo-inositol 3-phosphate = 1,2-di-(9Z-octadecenoyl)-sn-glycero-3-phospho-(1D-myo-inositol-3-phosphate) + CMP + H(+). The catalysed reaction is 1,2-dihexadecanoyl-sn-glycero-3-CDP + 1D-myo-inositol 3-phosphate = 1,2-dihexadecanoyl-sn-glycero-3-phospho-(1D-myo-inositol-3-phosphate) + CMP + H(+). The protein operates within phospholipid metabolism; phosphatidylinositol phosphate biosynthesis. Competitively inhibited by several inositol 1-phosphate analogs, including the phosphonate analog 1-deoxy-1-phosphonomethyl-myo-inositol (Ino-C-P). This leads to inhibition of M.smegmatis growth. Catalyzes the conjugation of the 1'-hydroxyl group of D-myo-inositol-3-phosphate (also named L-myo-inositol-1-phosphate) with a lipid tail of cytidine diphosphate diacylglycerol (CDP-DAG), forming phosphatidylinositol phosphate (PIP) and CMP. PIP is a precursor of phosphatidylinositol (PI) which is an essential lipid for mycobacteria required for formation of their cell wall. Is essential to the survival of M.smegmatis. In Mycolicibacterium smegmatis (strain ATCC 700084 / mc(2)155) (Mycobacterium smegmatis), this protein is Phosphatidylinositol phosphate synthase.